We begin with the raw amino-acid sequence, 174 residues long: uncharacterized protein (174 aa).

A helical membrane pass occupies residues 7–24 (LLLLAFAVCLAVGFSGCL).

The protein localises to the membrane. This is an uncharacterized protein from Methanocaldococcus jannaschii (strain ATCC 43067 / DSM 2661 / JAL-1 / JCM 10045 / NBRC 100440) (Methanococcus jannaschii).